Reading from the N-terminus, the 135-residue chain is BolA-like protein 1 (135 aa).

Phosphoserine is present on Ser81. Residues Trp114–Asn135 form a disordered region.

It belongs to the BolA/IbaG family. As to quaternary structure, interacts with GLRX5.

It is found in the mitochondrion. Acts as a mitochondrial iron-sulfur (Fe-S) cluster assembly factor that facilitates (Fe-S) cluster insertion into a subset of mitochondrial proteins. Probably acts together with the monothiol glutaredoxin GLRX5. May protect cells against oxidative stress. In Bos taurus (Bovine), this protein is BolA-like protein 1 (BOLA1).